Consider the following 142-residue polypeptide: uncharacterized protein (142 aa).

Residues 1-138 (MLEKLAEAHP…SFMILVKPLA (138 aa)) enclose the N-acetyltransferase domain.

This is an uncharacterized protein from Bacillus subtilis (strain 168).